The following is a 423-amino-acid chain: MKLYSLGVLVATVLFCGEHAFAFQRGQVLSALPRTSRQVQILQNVTTTYKIVLWQPVAAEYIVKGYEVHFFVNASDVSNVKAHLNASRIPFRVLVENVEDLIRQQTSNDTISPRASSSYYEQYHSLNEIYSWIEVMTERYPDMVEKIHIGSSYEKYPLYVLKVSKKEQRAKNAMWIDCGIHAREWISPAFCLWFVGSVTYYYGKEKMHTNLLKHMDFYIMPVVNVDGYDYTWKKDRMWRKNRSLHEKNACVGTDLNRNFASKHWCGEGASSSSCSEIYCGTYPESEPEVKAVADFLRRNIKHIKAYISMHSYSQKIVFPYSYSRSRSKDHEELSLVAREAVFAMENIHRNIRYTHGSGSESLYLAPGGSDDWIYDLGIKYSFTFELRDKGKYGFLLPESYIRPTCSEALVAVAKIASHVVKNV.

Residues Met-1–Ala-22 form the signal peptide. A propeptide spans Phe-23–Arg-114 (activation peptide). N-linked (GlcNAc...) asparagine glycans are attached at residues Asn-44, Asn-73, Asn-85, and Asn-108. The Peptidase M14 domain maps to Gln-122–Val-419. A disulfide bridge links Cys-178 with Cys-191. 2 residues coordinate Zn(2+): His-181 and Glu-184. Residues His-181–Glu-184 and Arg-239 each bind substrate. The N-linked (GlcNAc...) asparagine glycan is linked to Asn-241. 2 disulfide bridges follow: Cys-250–Cys-274 and Cys-265–Cys-279. Position 256–257 (Asn-256–Arg-257) interacts with substrate. His-310 contributes to the Zn(2+) binding site. Substrate is bound by residues Ser-311–Tyr-312 and Tyr-363. The Proton donor/acceptor role is filled by Glu-385.

The protein belongs to the peptidase M14 family. Requires Zn(2+) as cofactor.

Its subcellular location is the secreted. The enzyme catalyses Release of C-terminal Arg and Lys from a polypeptide.. With respect to regulation, TAFI/CPB2 is unique among carboxypeptidases in that it spontaneously inactivates with a short half-life, a property that is crucial for its role in controlling blood clot lysis. The zymogen is stabilized by interactions with the activation peptide. Release of the activation peptide increases a dynamic flap mobility and in time this leads to conformational changes that disrupt the catalytic site and expose a cryptic thrombin-cleavage site present at Arg-324. Cleaves C-terminal arginine or lysine residues from biologically active peptides such as kinins or anaphylatoxins in the circulation thereby regulating their activities. Down-regulates fibrinolysis by removing C-terminal lysine residues from fibrin that has already been partially degraded by plasmin. The protein is Carboxypeptidase B2 (CPB2) of Bos taurus (Bovine).